The primary structure comprises 104 residues: Vegetative-specific protein H7 (104 aa).

Residues 43–97 enclose the HTH cro/C1-type domain; that stretch reads IQRARNALKMTQKELAFKINERPGVINEYESGSAIPSQAVLSKLEKALNVKLRGK. The H-T-H motif DNA-binding region spans 54 to 73; the sequence is QKELAFKINERPGVINEYES.

The chain is Vegetative-specific protein H7 (cinD-1) from Dictyostelium discoideum (Social amoeba).